Consider the following 343-residue polypeptide: Zinc finger protein Gfi-1b (343 aa).

Residues Met-1–Tyr-20 are mediates repression of transcription. The SNAG domain stretch occupies residues Met-1–Tyr-20. The interval Ser-51–Arg-77 is disordered. Over residues Glu-67 to Arg-77 the composition is skewed to basic and acidic residues. 6 C2H2-type zinc fingers span residues Tyr-176–His-199, Phe-205–His-227, Phe-233–His-255, Tyr-261–His-283, His-289–His-311, and Phe-317–His-340.

Its subcellular location is the nucleus. Functionally, essential transcriptional regulator necessary for development and differentiation of erythroid and megakaryocytic lineages. Alters histone methylation by recruiting histone methyltransferase to target genes promoters. Plays a role in heterochromatin formation. The sequence is that of Zinc finger protein Gfi-1b (gfi1b) from Xenopus laevis (African clawed frog).